The primary structure comprises 184 residues: Photosystem I assembly protein Ycf4 (184 aa).

A run of 2 helical transmembrane segments spans residues 22–42 (FCWA…GTSS) and 57–77 (IIFF…LFIS).

The protein belongs to the Ycf4 family.

It localises to the plastid. The protein resides in the chloroplast thylakoid membrane. Its function is as follows. Seems to be required for the assembly of the photosystem I complex. This chain is Photosystem I assembly protein Ycf4, found in Platanus occidentalis (Sycamore).